Consider the following 225-residue polypeptide: Orotate phosphoribosyltransferase (225 aa).

5-phospho-alpha-D-ribose 1-diphosphate is bound by residues Arg107, Lys108, Lys111, and 133–141 (EDLTTDGGS). Thr137 is a binding site for orotate.

The protein belongs to the purine/pyrimidine phosphoribosyltransferase family. PyrE subfamily. Homodimer. It depends on Mg(2+) as a cofactor.

It carries out the reaction orotidine 5'-phosphate + diphosphate = orotate + 5-phospho-alpha-D-ribose 1-diphosphate. The protein operates within pyrimidine metabolism; UMP biosynthesis via de novo pathway; UMP from orotate: step 1/2. In terms of biological role, catalyzes the transfer of a ribosyl phosphate group from 5-phosphoribose 1-diphosphate to orotate, leading to the formation of orotidine monophosphate (OMP). The sequence is that of Orotate phosphoribosyltransferase from Roseobacter denitrificans (strain ATCC 33942 / OCh 114) (Erythrobacter sp. (strain OCh 114)).